We begin with the raw amino-acid sequence, 239 residues long: Acyl-protein thioesterase 1 (239 aa).

Residues Ser124, Asp180, and His213 each act as charge relay system in the active site.

It belongs to the AB hydrolase superfamily. AB hydrolase 2 family.

Its subcellular location is the cytoplasm. It is found in the nucleus. It catalyses the reaction S-hexadecanoyl-L-cysteinyl-[protein] + H2O = L-cysteinyl-[protein] + hexadecanoate + H(+). Hydrolyzes fatty acids from S-acylated cysteine residues in proteins with a strong preference for palmitoylated G-alpha proteins over other acyl substrates. Mediates the deacylation of G-alpha proteins such as GPA1 in vivo, but has weak or no activity toward palmitoylated Ras proteins. Has weak lysophospholipase activity in vitro; however such activity may not exist in vivo. The protein is Acyl-protein thioesterase 1 of Emericella nidulans (strain FGSC A4 / ATCC 38163 / CBS 112.46 / NRRL 194 / M139) (Aspergillus nidulans).